A 72-amino-acid chain; its full sequence is Large ribosomal subunit protein bL32c (72 aa).

The tract at residues 49 to 72 is disordered; the sequence is PPAPVSENWDDEAKGFGKDLDAAE. The segment covering 59 to 72 has biased composition (basic and acidic residues); the sequence is DEAKGFGKDLDAAE.

The protein belongs to the bacterial ribosomal protein bL32 family.

It localises to the plastid. Its subcellular location is the chloroplast. The chain is Large ribosomal subunit protein bL32c from Ostreococcus tauri.